Here is a 76-residue protein sequence, read N- to C-terminus: MDILLELAGYTGIASGTAKKVVDAIDKGAAAFVIISIISTVISAGALGAVSASADFIILTVKNYISRNLKAQAVIW.

Residues 1 to 6 constitute a propeptide that is removed on maturation; sequence MDILLE. The segment at residues 7–76 is a cross-link (cyclopeptide (Leu-Trp)); it reads LAGYTGIASG…RNLKAQAVIW (70 aa).

This sequence belongs to the bacteriocin class V family.

It is found in the secreted. Functionally, cyclopeptide antibiotic with bacteriolytic activity against most streptococci (except S.rattus and S.mutans), Listeria spp., enterococci and staphylococci. The sequence is that of Bacteriocin uberolysin (ublA) from Streptococcus uberis.